The primary structure comprises 554 residues: DDB1- and CUL4-associated factor 11 homolog (554 aa).

Residues Q24–P52 form a disordered region. Residues D33–T43 show a composition bias toward acidic residues. WD repeat units follow at residues Q245–T284, A288–V328, G336–G375, G414–R458, and G461–I500. The interval P527–I554 is disordered.

It belongs to the WD repeat LEC14B family.

Its function is as follows. Involved in regulation of lifespan. Required for dopaminergic CEP neuron degeneration in response to Mn(2+). This chain is DDB1- and CUL4-associated factor 11 homolog (wdr-23), found in Caenorhabditis briggsae.